We begin with the raw amino-acid sequence, 141 residues long: Large ribosomal subunit protein uL11 (141 aa).

Belongs to the universal ribosomal protein uL11 family. Part of the ribosomal stalk of the 50S ribosomal subunit. Interacts with L10 and the large rRNA to form the base of the stalk. L10 forms an elongated spine to which L12 dimers bind in a sequential fashion forming a multimeric L10(L12)X complex. In terms of processing, one or more lysine residues are methylated.

In terms of biological role, forms part of the ribosomal stalk which helps the ribosome interact with GTP-bound translation factors. The sequence is that of Large ribosomal subunit protein uL11 from Campylobacter jejuni subsp. jejuni serotype O:6 (strain 81116 / NCTC 11828).